The chain runs to 448 residues: Vitamin D3 receptor (448 aa).

The nuclear receptor DNA-binding region spans Pro-41–Thr-116. Residues Cys-44, Cys-47, Cys-61, Cys-64, Cys-80, Cys-86, Cys-96, and Cys-99 each contribute to the Zn(2+) site. 2 NR C4-type zinc fingers span residues Cys-44–Cys-64 and Cys-80–Cys-104. The tract at residues Asp-117–Glu-146 is hinge. An NR LBD domain is found at Glu-147 to Gly-444. Ser-258 is a calcitriol binding site. Residues Lys-267 to Lys-285 form an interaction with coactivator LXXLL motif region. The calcitriol site is built by Arg-295, Ser-299, His-326, and His-418. Positions Pro-437–Asn-445 match the 9aaTAD motif.

It belongs to the nuclear hormone receptor family. NR1 subfamily. In terms of assembly, homodimer in the absence of bound vitamin D3. Heterodimer with RXRA after vitamin D3 binding.

It localises to the nucleus. It is found in the cytoplasm. Functionally, nuclear receptor for calcitriol, the active form of vitamin D3 which mediates the action of this vitamin on cells. Enters the nucleus upon vitamin D3 binding where it forms heterodimers with the retinoid X receptor/RXR. The VDR-RXR heterodimers bind to specific response elements on DNA and activate the transcription of vitamin D3-responsive target genes. Plays a central role in calcium homeostasis. Also functions as a receptor for the secondary bile acid lithocholic acid (LCA) and its metabolites. This is Vitamin D3 receptor (VDR) from Coturnix japonica (Japanese quail).